Reading from the N-terminus, the 201-residue chain is Probable molybdenum cofactor guanylyltransferase (201 aa).

GTP-binding positions include 20-22, lysine 32, aspartate 77, and aspartate 106; that span reads LAG. A Mg(2+)-binding site is contributed by aspartate 106.

Belongs to the MobA family. Mg(2+) is required as a cofactor.

It localises to the cytoplasm. The catalysed reaction is Mo-molybdopterin + GTP + H(+) = Mo-molybdopterin guanine dinucleotide + diphosphate. Transfers a GMP moiety from GTP to Mo-molybdopterin (Mo-MPT) cofactor (Moco or molybdenum cofactor) to form Mo-molybdopterin guanine dinucleotide (Mo-MGD) cofactor. This chain is Probable molybdenum cofactor guanylyltransferase, found in Aquifex aeolicus (strain VF5).